A 466-amino-acid chain; its full sequence is Serine/threonine-protein kinase SSN3 (466 aa).

The region spanning 32–396 (YKILGFISSG…ARDALRHPWF (365 aa)) is the Protein kinase domain. Residue 38–46 (ISSGTYGRV) coordinates ATP. Positions 58–105 (ASAKSALPSSTRAALSLPKDKLPSPSFTEDSDPLNNPEMCMRPGDRPA) are disordered. K114 provides a ligand contact to ATP. The active-site Proton acceptor is D216. Residues 421-466 (THEDNGDAKMGSLPQSMAGGRLPSSSNFRPASGNIVQPAARKKARI) are disordered.

Belongs to the protein kinase superfamily. CMGC Ser/Thr protein kinase family. CDC2/CDKX subfamily. In terms of assembly, component of the SRB8-11 complex, a regulatory module of the Mediator complex. The cofactor is Mg(2+).

Its subcellular location is the nucleus. The catalysed reaction is L-seryl-[protein] + ATP = O-phospho-L-seryl-[protein] + ADP + H(+). The enzyme catalyses L-threonyl-[protein] + ATP = O-phospho-L-threonyl-[protein] + ADP + H(+). It catalyses the reaction [DNA-directed RNA polymerase] + ATP = phospho-[DNA-directed RNA polymerase] + ADP + H(+). Its function is as follows. Component of the SRB8-11 complex. The SRB8-11 complex is a regulatory module of the Mediator complex which is itself involved in regulation of basal and activated RNA polymerase II-dependent transcription. The SRB8-11 complex may be involved in the transcriptional repression of a subset of genes regulated by Mediator. It may inhibit the association of the Mediator complex with RNA polymerase II to form the holoenzyme complex. The SRB8-11 complex phosphorylates the C-terminal domain (CTD) of the largest subunit of RNA polymerase II. The protein is Serine/threonine-protein kinase SSN3 (SSN3) of Cryptococcus neoformans var. neoformans serotype D (strain B-3501A) (Filobasidiella neoformans).